A 359-amino-acid chain; its full sequence is Isopentenyl-diphosphate delta-isomerase (359 aa).

Residue 11 to 12 (RK) coordinates substrate. Residues serine 68, 69 to 71 (GMT), serine 99, and asparagine 127 each bind FMN. 99–101 (SQR) lines the substrate pocket. Residue glutamine 163 participates in substrate binding. Glutamate 164 is a Mg(2+) binding site. FMN-binding positions include lysine 199, threonine 229, 278-280 (GIR), and 299-300 (AL).

Belongs to the IPP isomerase type 2 family. In terms of assembly, homooctamer. Dimer of tetramers. FMN is required as a cofactor. Requires NADPH as cofactor. Mg(2+) serves as cofactor.

It is found in the cytoplasm. It carries out the reaction isopentenyl diphosphate = dimethylallyl diphosphate. Its activity is regulated as follows. Inhibited by 3,4-epoxy-3-methylbutyl diphosphate (EIPP). Functionally, involved in the biosynthesis of isoprenoids. Catalyzes the 1,3-allylic rearrangement of the homoallylic substrate isopentenyl (IPP) to its allylic isomer, dimethylallyl diphosphate (DMAPP). This chain is Isopentenyl-diphosphate delta-isomerase, found in Methanocaldococcus jannaschii (strain ATCC 43067 / DSM 2661 / JAL-1 / JCM 10045 / NBRC 100440) (Methanococcus jannaschii).